A 253-amino-acid chain; its full sequence is 5'/3'-nucleotidase SurE (253 aa).

Asp-8, Asp-9, Ser-39, and Asn-92 together coordinate a divalent metal cation.

Belongs to the SurE nucleotidase family. A divalent metal cation serves as cofactor.

The protein localises to the cytoplasm. It catalyses the reaction a ribonucleoside 5'-phosphate + H2O = a ribonucleoside + phosphate. The catalysed reaction is a ribonucleoside 3'-phosphate + H2O = a ribonucleoside + phosphate. The enzyme catalyses [phosphate](n) + H2O = [phosphate](n-1) + phosphate + H(+). Nucleotidase with a broad substrate specificity as it can dephosphorylate various ribo- and deoxyribonucleoside 5'-monophosphates and ribonucleoside 3'-monophosphates with highest affinity to 3'-AMP. Also hydrolyzes polyphosphate (exopolyphosphatase activity) with the preference for short-chain-length substrates (P20-25). Might be involved in the regulation of dNTP and NTP pools, and in the turnover of 3'-mononucleotides produced by numerous intracellular RNases (T1, T2, and F) during the degradation of various RNAs. The chain is 5'/3'-nucleotidase SurE from Enterobacter sp. (strain 638).